We begin with the raw amino-acid sequence, 292 residues long: Ventral anterior homeobox 2 (292 aa).

A compositionally biased stretch (basic and acidic residues) spans 1–36 (MGDGGAERDRGPKRREEPGGRSGRHGEHRGAEDLRA). The segment at 1-74 (MGDGGAERDR…DGQQALGETD (74 aa)) is disordered. The homeobox DNA-binding region spans 102-161 (PKRTRTSFTAEQLYRLEMEFQRCQYVVGRERTELARQLNLSETQVKVWFQNRRTKQKKDQ). The disordered stretch occupies residues 207-242 (LPGLPASHRGTSLVDPRNSSPRLNPMPSASASSPLP).

Belongs to the EMX homeobox family. As to expression, expressed in the developing and mature retina.

The protein localises to the nucleus. Its function is as follows. Transcription factor that may function in dorsoventral specification of the forebrain. Regulates the expression of Wnt signaling antagonists including the expression of a truncated TCF7L2 isoform that cannot bind CTNNB1 and acts therefore as a potent dominant-negative Wnt antagonist. Plays a crucial role in eye development and, in particular, in the specification of the ventral optic vesicle. May be a regulator of axial polarization in the retina. The protein is Ventral anterior homeobox 2 (Vax2) of Mus musculus (Mouse).